The chain runs to 671 residues: MIKLNVDGSEIEVSEGSTVYQACTQAGKEIPHFCYHQRLKIAGNCRMCLVEMEKSPKPIASCAMPVSNGMVIHTDTPMVKKAREGVMEFLLINHPLDCPICDQGGECNLQDQAFRYGKGTNRFHENKRSIKDKYMGPLIKTAMTRCIQCTRCIRFASDIAGIEEIGAIHRGEHIEVTSYLEQTLDSEISGNMIDICPVGALNSKPYAFKARKWELKHTASIGVHDAEGSNIRIDSRGDEVMRILPRVNEEINEEWLSDKNRFSYDGLKYQRLDRPYIRKNGKLVEASWSEALKTVADKIKSVKPEKIVAIAGSLSSVEAMFMLKTLLQKLGSNNYSVNQFDYKLDTMQRGNYLFNTTIAGIEKADLCLLIGANPRQIAPVLNSRIGMRVRADSLKVARIGGGHNQTYKIQDLGSDIKIIEELAIGTHEFTKALKAAKYLMIIVGDGVYARDDGYAILSLIHKIVTEYNIMRDDWKGFNILHNHASIVGGLDIGFNTPIKLEELELAYLLGTDAIPFDKLKSTFIIYQGHHGDAGASSADVILPAAAYTEQSGIYVNLEGRPQIAEKAVSPVGVAKEDIEIIKELAGYLKIDIGMDNLQEVRVRLAKEYKVFASIDRIIENKFSKFSSKDKLSKEPITAEPINYYMTDVISKNSVTMAKCVEAKEARDEEVA.

The 2Fe-2S ferredoxin-type domain maps to 1–78; sequence MIKLNVDGSE…GMVIHTDTPM (78 aa). [2Fe-2S] cluster contacts are provided by cysteine 34, cysteine 45, cysteine 48, and cysteine 62. One can recognise a 4Fe-4S His(Cys)3-ligated-type domain in the interval 78–117; sequence MVKKAREGVMEFLLINHPLDCPICDQGGECNLQDQAFRYG. Residues histidine 94, cysteine 98, cysteine 101, cysteine 107, cysteine 146, cysteine 149, cysteine 152, and cysteine 196 each contribute to the [4Fe-4S] cluster site. The 57-residue stretch at 215 to 271 folds into the 4Fe-4S Mo/W bis-MGD-type domain; the sequence is LKHTASIGVHDAEGSNIRIDSRGDEVMRILPRVNEEINEEWLSDKNRFSYDGLKYQR.

It belongs to the complex I 75 kDa subunit family. It depends on [2Fe-2S] cluster as a cofactor. [4Fe-4S] cluster is required as a cofactor.

The catalysed reaction is a quinone + NADH + 5 H(+)(in) = a quinol + NAD(+) + 4 H(+)(out). Its function is as follows. NDH-1 shuttles electrons from NADH, via FMN and iron-sulfur (Fe-S) centers, to quinones in the respiratory chain. Couples the redox reaction to proton translocation (for every two electrons transferred, four hydrogen ions are translocated across the cytoplasmic membrane), and thus conserves the redox energy in a proton gradient. The protein is NADH-quinone oxidoreductase subunit G (nuoG) of Rickettsia conorii (strain ATCC VR-613 / Malish 7).